A 261-amino-acid chain; its full sequence is Antiviral protein S (261 aa).

2 cysteine pairs are disulfide-bonded: Cys34/Cys258 and Cys84/Cys105. Glu175 is an active-site residue.

It belongs to the ribosome-inactivating protein family. Type 1 RIP subfamily.

It catalyses the reaction Endohydrolysis of the N-glycosidic bond at one specific adenosine on the 28S rRNA.. Its function is as follows. Inhibits viral infection of plants, and protein synthesis in vitro. The polypeptide is Antiviral protein S (Phytolacca americana (American pokeweed)).